We begin with the raw amino-acid sequence, 310 residues long: Apolipoprotein E (310 aa).

Residues 1–18 form the signal peptide; that stretch reads MKVLWAALVVTLLAGCGA. Repeat copies occupy residues 77 to 98, 99 to 120, 121 to 142, 143 to 164, 165 to 186, 187 to 208, 209 to 226, and 227 to 248. The tract at residues 77 to 248 is 8 X 22 AA approximate tandem repeats; the sequence is ALMDDTMKEV…RLDEVREQVQ (172 aa). The segment at 155-165 is LDL and other lipoprotein receptors binding; the sequence is HLRKMRKRLLR. 159 to 162 serves as a coordination point for heparin; the sequence is MRKR. The tract at residues 207-283 is lipid-binding and lipoprotein association; the sequence is HTLVSKPLQE…SWFEPLVQDM (77 aa). Residue 222–229 coordinates heparin; it reads AQRLRGRL. The interval 259–310 is homooligomerization; sequence NQVRLQAEAFQGRLKSWFEPLVQDMQQKWAELVEKVQLAVGAVPTSVPSEKQ. Positions 271–283 are specificity for association with VLDL; the sequence is RLKSWFEPLVQDM.

The protein belongs to the apolipoprotein A1/A4/E family. In terms of assembly, homotetramer. May interact with ABCA1; functionally associated with ABCA1 in the biogenesis of HDLs. May interact with APP/A4 amyloid-beta peptide; the interaction is extremely stable in vitro but its physiological significance is unclear. May interact with MAPT. May interact with MAP2. In the cerebrospinal fluid, interacts with secreted SORL1. Interacts with PMEL; this allows the loading of PMEL luminal fragment on ILVs to induce fibril nucleation. In terms of processing, APOE exists as multiple glycosylated and sialylated glycoforms within cells and in plasma. The extent of glycosylation and sialylation are tissue and context specific. Glycated in plasma VLDL. Post-translationally, phosphorylated by FAM20C in the extracellular medium.

The protein localises to the secreted. Its subcellular location is the extracellular space. It localises to the extracellular matrix. The protein resides in the extracellular vesicle. It is found in the endosome. The protein localises to the multivesicular body. Functionally, APOE is an apolipoprotein, a protein associating with lipid particles, that mainly functions in lipoprotein-mediated lipid transport between organs via the plasma and interstitial fluids. APOE is a core component of plasma lipoproteins and is involved in their production, conversion and clearance. Apolipoproteins are amphipathic molecules that interact both with lipids of the lipoprotein particle core and the aqueous environment of the plasma. As such, APOE associates with chylomicrons, chylomicron remnants, very low density lipoproteins (VLDL) and intermediate density lipoproteins (IDL) but shows a preferential binding to high-density lipoproteins (HDL). It also binds a wide range of cellular receptors including the LDL receptor/LDLR and the very low-density lipoprotein receptor/VLDLR that mediate the cellular uptake of the APOE-containing lipoprotein particles. Finally, APOE also has a heparin-binding activity and binds heparan-sulfate proteoglycans on the surface of cells, a property that supports the capture and the receptor-mediated uptake of APOE-containing lipoproteins by cells. The protein is Apolipoprotein E (APOE) of Ceratotherium simum cottoni (Northern white rhinoceros).